The chain runs to 468 residues: ATP synthase subunit beta 2 (468 aa).

145–152 is a binding site for ATP; the sequence is GGAGVGKT.

This sequence belongs to the ATPase alpha/beta chains family. As to quaternary structure, F-type ATPases have 2 components, CF(1) - the catalytic core - and CF(0) - the membrane proton channel. CF(1) has five subunits: alpha(3), beta(3), gamma(1), delta(1), epsilon(1). CF(0) has three main subunits: a(1), b(2) and c(9-12). The alpha and beta chains form an alternating ring which encloses part of the gamma chain. CF(1) is attached to CF(0) by a central stalk formed by the gamma and epsilon chains, while a peripheral stalk is formed by the delta and b chains.

It is found in the cell membrane. The catalysed reaction is ATP + H2O + 4 H(+)(in) = ADP + phosphate + 5 H(+)(out). Produces ATP from ADP in the presence of a proton gradient across the membrane. The catalytic sites are hosted primarily by the beta subunits. This Mycoplasmopsis pulmonis (strain UAB CTIP) (Mycoplasma pulmonis) protein is ATP synthase subunit beta 2.